The following is a 1148-amino-acid chain: Small G protein signaling modulator 1 (1148 aa).

Positions 36–190 (HEDSSHIISF…EYTKMKTADH (155 aa)) constitute an RUN domain. The interval 256-297 (LLYGKNNVLVQPRDDMEAVPGYLSLHQTADVMTLKWTPNQLM) is important for interaction with RAB9A and RAB9B. Positions 301 to 350 (VGDLDYEKSVYWDYAMTIRLEEIVYLHCHQQVDSGGTVVLVSQDGIQRPP) are required for interaction with RAP family members. Disordered stretches follow at residues 377-411 (DPPLWSQRGKGKVFPKLRKRSPQGSAESTSSDKDD), 700-830 (DSTI…PREE), and 871-894 (GWRSSETEKHGQADSEDNLSEEPE). The span at 385–397 (GKGKVFPKLRKRS) shows a compositional bias: basic residues. Residues 617 to 1081 (GIQPEIRKAV…LVWETIWAAK (465 aa)) form the Rab-GAP TBC domain. Polar residues predominate over residues 702 to 716 (TISNESSQSCSSGRQ). Positions 742 to 751 (AEGRLEEKQP) are enriched in basic and acidic residues. Residues 757 to 802 (NLVNGTCSPDSGHPSSHNFSSGLSEHSEPSLSTEDSVLDAQRNTPT) show a composition bias toward polar residues. 2 stretches are compositionally biased toward basic and acidic residues: residues 805–816 (RPRDGSVDDRQS) and 871–883 (GWRSSETEKHGQA). Over residues 884-894 (DSEDNLSEEPE) the composition is skewed to acidic residues.

It belongs to the RUTBC family. In terms of assembly, interacts with RAB9A (GTP-bound form) and RAB9B (GTP-bound form); has much lower affinity for GDP-bound RAB9A and RAB9B. Interacts with RAB3A, RAB4A, RAB5A, RAB8A, RAB11A, RAP1A, RAP1B, RAP2A and RAP2B. No interaction with RAB27A. Mainly expressed in brain, heart and testis.

Its subcellular location is the golgi apparatus. The protein resides in the trans-Golgi network. It is found in the cytoplasmic vesicle membrane. The protein localises to the cytoplasm. Functionally, interacts with numerous Rab family members, functioning as Rab effector for some, and as GTPase activator for others. Promotes GTP hydrolysis by RAB34 and RAB36. Probably functions as a GTPase effector with RAB9A and RAB9B; does not stimulate GTP hydrolysis with RAB9A and RAB9B. The sequence is that of Small G protein signaling modulator 1 (SGSM1) from Homo sapiens (Human).